We begin with the raw amino-acid sequence, 508 residues long: GMP synthase [glutamine-hydrolyzing] (508 aa).

Residues 1–189 (MILVLDFGSQ…ALLVCGCEKT (189 aa)) form the Glutamine amidotransferase type-1 domain. C78 acts as the Nucleophile in catalysis. Catalysis depends on residues H163 and E165. A GMPS ATP-PPase domain is found at 190–383 (WGMQHFAQRE…LGVSQDFLMR (194 aa)). An ATP-binding site is contributed by 217–223 (SGGVDST).

Homodimer.

It catalyses the reaction XMP + L-glutamine + ATP + H2O = GMP + L-glutamate + AMP + diphosphate + 2 H(+). It functions in the pathway purine metabolism; GMP biosynthesis; GMP from XMP (L-Gln route): step 1/1. In terms of biological role, catalyzes the synthesis of GMP from XMP. The protein is GMP synthase [glutamine-hydrolyzing] (guaA) of Helicobacter pylori (strain ATCC 700392 / 26695) (Campylobacter pylori).